The following is a 490-amino-acid chain: Ribulose bisphosphate carboxylase large chain (490 aa).

Asn-127 and Thr-177 together coordinate substrate. The active-site Proton acceptor is Lys-179. Lys-181 is a binding site for substrate. Mg(2+) is bound by residues Lys-205, Asp-207, and Glu-208. Lys-205 is subject to N6-carboxylysine. The Proton acceptor role is filled by His-297. 3 residues coordinate substrate: Arg-298, His-330, and Ser-382.

The protein belongs to the RuBisCO large chain family. Type I subfamily. In terms of assembly, heterohexadecamer of 8 large chains and 8 small chains. The cofactor is Mg(2+).

It localises to the plastid. The protein localises to the chloroplast. The enzyme catalyses 2 (2R)-3-phosphoglycerate + 2 H(+) = D-ribulose 1,5-bisphosphate + CO2 + H2O. It catalyses the reaction D-ribulose 1,5-bisphosphate + O2 = 2-phosphoglycolate + (2R)-3-phosphoglycerate + 2 H(+). Functionally, ruBisCO catalyzes two reactions: the carboxylation of D-ribulose 1,5-bisphosphate, the primary event in carbon dioxide fixation, as well as the oxidative fragmentation of the pentose substrate in the photorespiration process. Both reactions occur simultaneously and in competition at the same active site. The polypeptide is Ribulose bisphosphate carboxylase large chain (Trieres chinensis (Marine centric diatom)).